Consider the following 72-residue polypeptide: Translation initiation factor IF-1 (72 aa).

The region spanning 1-72 (MAKEENIEMQ…SKGRIIFRAR (72 aa)) is the S1-like domain.

Belongs to the IF-1 family. In terms of assembly, component of the 30S ribosomal translation pre-initiation complex which assembles on the 30S ribosome in the order IF-2 and IF-3, IF-1 and N-formylmethionyl-tRNA(fMet); mRNA recruitment can occur at any time during PIC assembly.

The protein resides in the cytoplasm. Functionally, one of the essential components for the initiation of protein synthesis. Stabilizes the binding of IF-2 and IF-3 on the 30S subunit to which N-formylmethionyl-tRNA(fMet) subsequently binds. Helps modulate mRNA selection, yielding the 30S pre-initiation complex (PIC). Upon addition of the 50S ribosomal subunit IF-1, IF-2 and IF-3 are released leaving the mature 70S translation initiation complex. The protein is Translation initiation factor IF-1 of Colwellia psychrerythraea (strain 34H / ATCC BAA-681) (Vibrio psychroerythus).